Here is a 1217-residue protein sequence, read N- to C-terminus: Disease resistance protein RPS4 (1217 aa).

The region spanning 14–175 is the TIR domain; the sequence is PQHQVFINFR…EIVKAVKTAL (162 aa). 23–28 lines the NAD(+) pocket; that stretch reads RGADLR. An important for interaction with RRS1 region spans residues 33-34; the sequence is SH. Glu88 is a catalytic residue. The NB-ARC domain maps to 211–472; sequence EQRLKDLEEK…FRSQDKDYVE (262 aa). 11 LRR repeats span residues 581 to 606, 614 to 636, 637 to 659, 682 to 706, 708 to 728, 729 to 749, 750 to 774, 796 to 818, 819 to 842, 843 to 860, and 861 to 887; these read MGNLRYLKFYNSHCPQECKTNNKINI, LKEVRCLHWLKFPLETLPNDFNP, INLVDLKLPYSEMEQLWEGDKDT, AEKLQRLNLEGCTTLKAFPHDMKKM, MLAFLNLKGCTSLESLPEMNL, ISLKTLTLSGCSTFKEFPLIS, DNIETLYLDGTAISQLPMNMEKLQR, LKALQELILSDCLNLKIFPEIDI, SFLNILLLDGTAIEVMPQLPSVQY, LCLSRNAKISCLPVGISQ, and LSQLKWLDLKYCTSLTSVPEFPPNLQC. Positions 1161 to 1195 are disordered; the sequence is TTEGVDGRVNKKKKTRMDNGRPKKKQRSGRDDNQT. The Nuclear localization signal motif lies at 1170–1177; sequence NKKKKTRM.

The protein belongs to the disease resistance TIR-NB-LRR family. Interacts with EDS1. Interacts with SRFR1. Interacts with RRS1.

Its subcellular location is the endomembrane system. The protein localises to the cytoplasm. The protein resides in the nucleus. It catalyses the reaction NAD(+) + H2O = ADP-D-ribose + nicotinamide + H(+). Functionally, disease resistance (R) protein that specifically recognizes the AvrRps4 type III effector avirulence protein from P.syringae. Resistance proteins guard the plant against pathogens that contain an appropriate avirulence protein via an indirect interaction with this avirulence protein. That triggers a defense system including the hypersensitive response, which restricts the pathogen growth. Probably acts as a NAD(+) hydrolase (NADase): in response to activation, catalyzes cleavage of NAD(+) into ADP-D-ribose (ADPR) and nicotinamide; NAD(+) cleavage triggering a defense system that promotes cell death. The combined presence of both regular and alternative RPS4 transcripts with truncated open reading frames (ORFs) is necessary for function. RPS4 function is regulated at multiple levels, including gene expression, alternative splicing, and protein stability. When over-expressed, confers temperature-conditioned EDS1-dependent auto-immunity. Heterodimerization with RRS1 is required to form a functional complex to recognize AvrRps4 and PopP2. Abscisic acid deficiency enhances nuclear accumulation of RPS4 and its cell death-inducing activity. The chain is Disease resistance protein RPS4 from Arabidopsis thaliana (Mouse-ear cress).